Consider the following 295-residue polypeptide: Pyridoxal 5'-phosphate synthase subunit PdxS (295 aa).

Aspartate 25 provides a ligand contact to D-ribose 5-phosphate. Lysine 82 serves as the catalytic Schiff-base intermediate with D-ribose 5-phosphate. Residue glycine 154 coordinates D-ribose 5-phosphate. Arginine 166 is a binding site for D-glyceraldehyde 3-phosphate. D-ribose 5-phosphate-binding positions include glycine 215 and 236–237 (GS).

The protein belongs to the PdxS/SNZ family. In the presence of PdxT, forms a dodecamer of heterodimers.

The catalysed reaction is aldehydo-D-ribose 5-phosphate + D-glyceraldehyde 3-phosphate + L-glutamine = pyridoxal 5'-phosphate + L-glutamate + phosphate + 3 H2O + H(+). It functions in the pathway cofactor biosynthesis; pyridoxal 5'-phosphate biosynthesis. Its function is as follows. Catalyzes the formation of pyridoxal 5'-phosphate from ribose 5-phosphate (RBP), glyceraldehyde 3-phosphate (G3P) and ammonia. The ammonia is provided by the PdxT subunit. Can also use ribulose 5-phosphate and dihydroxyacetone phosphate as substrates, resulting from enzyme-catalyzed isomerization of RBP and G3P, respectively. This chain is Pyridoxal 5'-phosphate synthase subunit PdxS, found in Heliobacterium modesticaldum (strain ATCC 51547 / Ice1).